Here is a 172-residue protein sequence, read N- to C-terminus: Oleosin 18 kDa (172 aa).

Ala2 bears the N-acetylalanine mark. The interval 2-38 (ADRDRAGQYYQQQRGQVGETVKGILPEKAPSASQALT) is polar. Residues 39-110 (VATLFPLGGL…GGLSSLTFLA (72 aa)) are hydrophobic. The next 3 helical transmembrane spans lie at 42 to 62 (LFPL…ASVV), 70 to 90 (VFLI…LAVA), and 91 to 111 (GFLT…FLAN). Residues 147–172 (HAIQGRADQAGTGAGAGGGAGTKTSS) are disordered. The span at 158-172 (TGAGAGGGAGTKTSS) shows a compositional bias: gly residues.

This sequence belongs to the oleosin family.

The protein localises to the lipid droplet. It localises to the membrane. Its function is as follows. May have a structural role to stabilize the lipid body during desiccation of the seed by preventing coalescence of the oil. Probably interacts with both lipid and phospholipid moieties of lipid bodies. May also provide recognition signals for specific lipase anchorage in lipolysis during seedling growth. The protein is Oleosin 18 kDa (OLE18) of Oryza sativa subsp. indica (Rice).